The primary structure comprises 449 residues: MSEEAPKHEAPSVISPIENEEKGLAPKPLERVPPNGGAKAWACVAGSFLLQFCSFGYVNACGIFQLYYQETMLKDQTSSALAWITTLQIFLLFMFGPAVGKMIDVYGCRRTLPPFSIGAVFSVCMLSLCTKYWQVMLAQGVAFGLAAAGLSLPAMATATQWFSTKKGLAVGIVSAGSSLGGVIYPCMLPRLIEQVGFASAVRWTALMQGILLFIANLLCSSPYPPLGRASKEASAEKDATEPTPRRSGLRGFKSLPWGFFVLGCFFTMWGLFAPLNYLPEMAALHGYQSFARYTLAIANAGSLVGRIVPGWVSDIIGQFNTMCIVTSLSGVLVLAFWLPLEFHTSLAGIIVFALLFGFVSGGFVSLGPPCVVSLAEDRVDEIGVKLGGFCLAIALGALTGLPIEGAIKDREGNKFTGLMCFAGATMILGGVCTGTARVFKGGPRLMKKV.

12 helical membrane-spanning segments follow: residues valine 44–phenylalanine 64, alanine 80–glycine 100, leucine 112–tyrosine 132, valine 135–methionine 155, leucine 168–leucine 188, valine 195–alanine 215, leucine 255–leucine 275, alanine 296–isoleucine 316, methionine 322–phenylalanine 342, leucine 346–leucine 366, glycine 387–isoleucine 407, and phenylalanine 415–threonine 435.

The protein belongs to the major facilitator superfamily. Monocarboxylate porter (TC 2.A.1.13) family.

It is found in the membrane. MFS-type transporter; part of the gene cluster that mediates the biosynthesis of hexadehydro-astechrome (HAS), a tryptophan-derived iron(III)-complex that acts as a virulence factor in infected mice. Required for the production of HAS. The protein is MFS-type transporter hasB of Aspergillus fumigatus (strain CBS 144.89 / FGSC A1163 / CEA10) (Neosartorya fumigata).